Reading from the N-terminus, the 337-residue chain is UDP-3-O-acylglucosamine N-acyltransferase (337 aa).

The active-site Proton acceptor is the His-238.

The protein belongs to the transferase hexapeptide repeat family. LpxD subfamily. Homotrimer.

The catalysed reaction is a UDP-3-O-[(3R)-3-hydroxyacyl]-alpha-D-glucosamine + a (3R)-hydroxyacyl-[ACP] = a UDP-2-N,3-O-bis[(3R)-3-hydroxyacyl]-alpha-D-glucosamine + holo-[ACP] + H(+). It functions in the pathway bacterial outer membrane biogenesis; LPS lipid A biosynthesis. Its function is as follows. Catalyzes the N-acylation of UDP-3-O-acylglucosamine using 3-hydroxyacyl-ACP as the acyl donor. Is involved in the biosynthesis of lipid A, a phosphorylated glycolipid that anchors the lipopolysaccharide to the outer membrane of the cell. This Xanthomonas oryzae pv. oryzae (strain MAFF 311018) protein is UDP-3-O-acylglucosamine N-acyltransferase.